The chain runs to 494 residues: MFS-type transporter lnaF (494 aa).

Positions 1–51 are disordered; it reads MTYDPENAMGEARADAPVEAEKEHEATQTTVKESTLGYDNSSDPSRRDSYR. Positions 12–26 are enriched in basic and acidic residues; that stretch reads ARADAPVEAEKEHEA. 3 N-linked (GlcNAc...) asparagine glycosylation sites follow: Asn40, Asn58, and Asn68. 10 helical membrane passes run 105 to 125, 128 to 148, 156 to 176, 203 to 223, 228 to 248, 290 to 310, 323 to 343, 354 to 374, 383 to 403, and 446 to 466; these read SLLI…DMFS, AGLL…TLAL, MLWY…GEYP, TLMA…CLIA, LPVT…IIMV, LAFF…STII, AIWQ…GAWL, ILGF…FPHL, VLYG…IGLI, and STFY…WFLP.

This sequence belongs to the major facilitator superfamily. Sugar transporter (TC 2.A.1.1) family.

The protein localises to the cell membrane. Its function is as follows. MFS-type transporter; part of the lna gene cluster that mediates the biosynthesis of diastereomeric piperazines. Lna and lnb clusters encode sets of enzymes that produce overlapping sets of previously undescribed metabolites such as piperazinomycin-like metabolites or morpholine. The lna and lnb biosynthetic pathways appear to be part of a signaling network that controls the formation of sclerotia, a resilient overwintering structure. May be involved in the secretion of the metabolites produced by the lna and lnb clusters. The chain is MFS-type transporter lnaF from Aspergillus flavus (strain ATCC 200026 / FGSC A1120 / IAM 13836 / NRRL 3357 / JCM 12722 / SRRC 167).